The following is a 287-amino-acid chain: Nucleotide-binding protein VP2673 (287 aa).

8-15 provides a ligand contact to ATP; the sequence is GHSGAGKS. GTP is bound at residue 56 to 59; sequence DIRN.

This sequence belongs to the RapZ-like family.

Displays ATPase and GTPase activities. The protein is Nucleotide-binding protein VP2673 of Vibrio parahaemolyticus serotype O3:K6 (strain RIMD 2210633).